The primary structure comprises 233 residues: Purine nucleoside phosphorylase DeoD-type (233 aa).

Residue His4 participates in a purine D-ribonucleoside binding. Phosphate-binding positions include Gly20, Arg24, Arg43, and 87 to 90 (RVGS). Residues 178 to 180 (EME) and 202 to 203 (SD) each bind a purine D-ribonucleoside. The Proton donor role is filled by Asp203.

Belongs to the PNP/UDP phosphorylase family. Homohexamer; trimer of homodimers.

The catalysed reaction is a purine D-ribonucleoside + phosphate = a purine nucleobase + alpha-D-ribose 1-phosphate. It catalyses the reaction a purine 2'-deoxy-D-ribonucleoside + phosphate = a purine nucleobase + 2-deoxy-alpha-D-ribose 1-phosphate. In terms of biological role, catalyzes the reversible phosphorolytic breakdown of the N-glycosidic bond in the beta-(deoxy)ribonucleoside molecules, with the formation of the corresponding free purine bases and pentose-1-phosphate. The protein is Purine nucleoside phosphorylase DeoD-type of Bacillus subtilis (strain 168).